We begin with the raw amino-acid sequence, 265 residues long: GTP cyclohydrolase FolE2 (265 aa).

It belongs to the GTP cyclohydrolase IV family.

The catalysed reaction is GTP + H2O = 7,8-dihydroneopterin 3'-triphosphate + formate + H(+). It functions in the pathway cofactor biosynthesis; 7,8-dihydroneopterin triphosphate biosynthesis; 7,8-dihydroneopterin triphosphate from GTP: step 1/1. Functionally, converts GTP to 7,8-dihydroneopterin triphosphate. This chain is GTP cyclohydrolase FolE2, found in Bordetella avium (strain 197N).